Reading from the N-terminus, the 169-residue chain is Secretory-abundant heat soluble protein 1 (169 aa).

The first 19 residues, 1–19, serve as a signal peptide directing secretion; the sequence is MSRAAVAIALLGCVVAAYG. The interval 31–60 is SAHS-c1; it reads EWTGKSWMGKWESTDRIENFDAFISALGLP. Positions 75–103 are SAHS-c2; the sequence is WKEGDHYHHQISVPDKNYKNDVNFKLNEE. Asparagine 109 is a glycosylation site (N-linked (GlcNAc...) asparagine). Positions 116–165 are SAHS-c3; the sequence is KYTEDGGNLKAEVHVPSRNKVIHDEYKVNGDELEKTYKVGDVTAKRWYKK.

It belongs to the Secretory-abundant heat soluble protein (SAHS) family.

It is found in the secreted. Secreted heat soluble protein acting as a molecular shield in water-deficient condition. Tardigrade-specific intrinsically disordered proteins (TDPs) are essential for desiccation tolerance by forming non-crystalline amorphous solids upon desiccation, and this vitrified state mirrors their protective capabilities. This is Secretory-abundant heat soluble protein 1 from Ramazzottius varieornatus (Water bear).